Here is a 711-residue protein sequence, read N- to C-terminus: Polyribonucleotide nucleotidyltransferase (711 aa).

2 residues coordinate Mg(2+): D486 and D492. The region spanning 553-612 is the KH domain; it reads PRIHTIKINPDKIKDVIGKGGSVIRALTEETGTTIEIEDDGTVKIAATDGEKAKHAIRRI. The S1 motif domain maps to 622-690; sequence GRVYTGKVTR…RQGRIRLSIK (69 aa). A disordered region spans residues 689–711; sequence IKEATEQSQPAAAPEAPAAEQGE. Over residues 694-711 the composition is skewed to low complexity; that stretch reads EQSQPAAAPEAPAAEQGE.

This sequence belongs to the polyribonucleotide nucleotidyltransferase family. As to quaternary structure, component of the RNA degradosome, which is a multiprotein complex involved in RNA processing and mRNA degradation. The cofactor is Mg(2+).

The protein localises to the cytoplasm. The catalysed reaction is RNA(n+1) + phosphate = RNA(n) + a ribonucleoside 5'-diphosphate. Its function is as follows. Involved in mRNA degradation. Catalyzes the phosphorolysis of single-stranded polyribonucleotides processively in the 3'- to 5'-direction. The protein is Polyribonucleotide nucleotidyltransferase of Shigella flexneri serotype 5b (strain 8401).